Reading from the N-terminus, the 446-residue chain is MRLPVPDQVLPADRLGRVHFVGIGGAGLSGIARIMLARGITVSGSDGTDSPTLTALRELGARVHLGHDAAHVHDVDTLVVSTAVREDNPEYVEAVRQGLRVLPRSAALAAVMAGRRVVAVAGTHGKTTTTSLLTVALQAAGADPTYAIGGDLAATGVNAAEGTGDLFVAEADESDGAFLHYSPYAAVVTNIEADHLDQWGTPEAYAAAFDEFADTLAPDGFLVCVADDPGAAALAERHRAAGRRVVTVSARDAGALDGVTLWSPGEHYLADALAALAAGVELGYAAADLARGLASYTGTKRRMERKGEAGGVRVYDSYAHHPTEIAGDLQAARAVAGSGRVVVAFQPHLVSRTRIFGTAMGRALGAADEVVVLDVYLAREDPDPEVTGALVAGAVPLPAERVAYVADFDAVAAELVARARPGDLVLTLGAGTVTAIGPRVLGLLDG.

122 to 128 is an ATP binding site; sequence GTHGKTT.

Belongs to the MurCDEF family.

It is found in the cytoplasm. The enzyme catalyses UDP-N-acetyl-alpha-D-muramate + L-alanine + ATP = UDP-N-acetyl-alpha-D-muramoyl-L-alanine + ADP + phosphate + H(+). It functions in the pathway cell wall biogenesis; peptidoglycan biosynthesis. Its function is as follows. Cell wall formation. The sequence is that of UDP-N-acetylmuramate--L-alanine ligase from Nocardioides sp. (strain ATCC BAA-499 / JS614).